Consider the following 131-residue polypeptide: Small ribosomal subunit protein uS8 (131 aa).

It belongs to the universal ribosomal protein uS8 family. Part of the 30S ribosomal subunit. Contacts proteins S5 and S12.

Its function is as follows. One of the primary rRNA binding proteins, it binds directly to 16S rRNA central domain where it helps coordinate assembly of the platform of the 30S subunit. The sequence is that of Small ribosomal subunit protein uS8 from Cupriavidus metallidurans (strain ATCC 43123 / DSM 2839 / NBRC 102507 / CH34) (Ralstonia metallidurans).